Here is a 980-residue protein sequence, read N- to C-terminus: Exportin-T (980 aa).

The protein belongs to the exportin family. Expressed in roots, stems, leaves, flowers and embryos.

Its subcellular location is the nucleus. The protein resides in the cytoplasm. Functionally, probable tRNA nucleus export receptor which regulates tRNA processing and facilitates tRNA translocation across the nuclear pore complex. Is required for correct leaf initiation at different developmental stages and may play a role in floral patterning. The protein is Exportin-T of Oryza sativa subsp. japonica (Rice).